Consider the following 202-residue polypeptide: Small ribosomal subunit protein uS4c (202 aa).

One can recognise an S4 RNA-binding domain in the interval 90 to 153; that stretch reads MRLDNVIFRL…KSEAIISKNI (64 aa).

Belongs to the universal ribosomal protein uS4 family. Part of the 30S ribosomal subunit. Contacts protein S5. The interaction surface between S4 and S5 is involved in control of translational fidelity.

It is found in the plastid. Its subcellular location is the chloroplast. Functionally, one of the primary rRNA binding proteins, it binds directly to 16S rRNA where it nucleates assembly of the body of the 30S subunit. Its function is as follows. With S5 and S12 plays an important role in translational accuracy. This is Small ribosomal subunit protein uS4c (rps4) from Cyathophorum bulbosum (Moss).